Reading from the N-terminus, the 189-residue chain is Threonylcarbamoyl-AMP synthase (189 aa).

Residues 7-189 (NPRVNYAANM…LLTGQVVRPS (183 aa)) enclose the YrdC-like domain.

It belongs to the SUA5 family. TsaC subfamily.

The protein resides in the cytoplasm. It catalyses the reaction L-threonine + hydrogencarbonate + ATP = L-threonylcarbamoyladenylate + diphosphate + H2O. Required for the formation of a threonylcarbamoyl group on adenosine at position 37 (t(6)A37) in tRNAs that read codons beginning with adenine. Catalyzes the conversion of L-threonine, HCO(3)(-)/CO(2) and ATP to give threonylcarbamoyl-AMP (TC-AMP) as the acyladenylate intermediate, with the release of diphosphate. The protein is Threonylcarbamoyl-AMP synthase of Cellvibrio japonicus (strain Ueda107) (Pseudomonas fluorescens subsp. cellulosa).